Consider the following 586-residue polypeptide: Glutamate--tRNA ligase (586 aa).

A 'HIGH' region motif is present at residues 114 to 124 (PNPNGPWHVGH). Composition is skewed to basic and acidic residues over residues 431-443 (ARGE…HEAV) and 459-468 (HPEHPDRGDR). Positions 431–468 (ARGEGPEESHEAVEVPVDDGPDEATPQVHPEHPDRGDR) are disordered.

This sequence belongs to the class-I aminoacyl-tRNA synthetase family. Glutamate--tRNA ligase type 2 subfamily.

It localises to the cytoplasm. The enzyme catalyses tRNA(Glu) + L-glutamate + ATP = L-glutamyl-tRNA(Glu) + AMP + diphosphate. Catalyzes the attachment of glutamate to tRNA(Glu) in a two-step reaction: glutamate is first activated by ATP to form Glu-AMP and then transferred to the acceptor end of tRNA(Glu). This is Glutamate--tRNA ligase from Halobacterium salinarum (strain ATCC 29341 / DSM 671 / R1).